The following is a 502-amino-acid chain: Serine carboxypeptidase-like 40 (502 aa).

Residues M1–S24 form the signal peptide. N-linked (GlcNAc...) asparagine glycosylation is found at N103 and N187. 3 cysteine pairs are disulfide-bonded: C136-C384, C293-C307, and C331-C352. S229 is an active-site residue. N-linked (GlcNAc...) asparagine glycans are attached at residues N333 and N373. D420 is an active-site residue. An N-linked (GlcNAc...) asparagine glycan is attached at N436. H473 is an active-site residue.

It belongs to the peptidase S10 family. Expressed in roots, leaves, flowers and siliques.

It localises to the secreted. Its function is as follows. Probable carboxypeptidase. The polypeptide is Serine carboxypeptidase-like 40 (SCPL40) (Arabidopsis thaliana (Mouse-ear cress)).